The chain runs to 317 residues: Petrobactin-binding protein YclQ (317 aa).

Positions 1–19 are cleaved as a signal peptide; it reads MKKFALLFIALVTAVVISA. Cysteine 20 is lipidated: N-palmitoyl cysteine. Cysteine 20 is lipidated: S-diacylglycerol cysteine. The Fe/B12 periplasmic-binding domain maps to 56 to 317; that stretch reads KVVVFDFGSL…IKEVKDGLEK (262 aa).

The protein belongs to the bacterial solute-binding protein 8 family. In terms of assembly, the complex is composed of two ATP-binding proteins (YclP), two transmembrane proteins (YclN and YclO) and a solute-binding protein (YclQ). Interacts with FloT.

Its subcellular location is the cell membrane. The protein localises to the membrane raft. Functionally, part of the ABC transporter complex YclNOPQ involved in uptake of ferric-petrobactin. Petrobactin is a photoreactive 3,4-catecholate siderophore produced by many members of the B.cereus group, including B.anthracis. Binds selectively iron-free and ferric petrobactin and the petrobactin precursor 3,4-dihydroxybenzoic acid (3,4-DHB). This is Petrobactin-binding protein YclQ (yclQ) from Bacillus subtilis (strain 168).